A 66-amino-acid chain; its full sequence is Toxin Aah6 (66 aa).

The LCN-type CS-alpha/beta domain occupies 2–65; the sequence is RDGYVVKNGT…LYGDDGTYCS (64 aa). N9 carries N-linked (GlcNAc...) asparagine glycosylation. 4 disulfides stabilise this stretch: C13–C64, C17–C40, C26–C45, and C30–C47.

The protein belongs to the long (4 C-C) scorpion toxin superfamily. Sodium channel inhibitor family. Beta subfamily. Post-translationally, N-glycans are core-fucosylated, heterogeneous and short which could be the result of extensive trimming. As to expression, expressed by the venom gland.

It is found in the secreted. Its function is as follows. Beta toxins bind voltage-independently at site-4 of sodium channels and shift the voltage of activation toward more negative potentials thereby affecting sodium channel activation and promoting spontaneous and repetitive firing. This toxin is active only on insects. This toxin has very low anti-insect activity. In Androctonus australis (Sahara scorpion), this protein is Toxin Aah6.